Reading from the N-terminus, the 295-residue chain is Bifunctional protein FolD (295 aa).

NADP(+)-binding positions include 166–168, Ser-191, and Ile-232; that span reads GRS.

The protein belongs to the tetrahydrofolate dehydrogenase/cyclohydrolase family. Homodimer.

It catalyses the reaction (6R)-5,10-methylene-5,6,7,8-tetrahydrofolate + NADP(+) = (6R)-5,10-methenyltetrahydrofolate + NADPH. The enzyme catalyses (6R)-5,10-methenyltetrahydrofolate + H2O = (6R)-10-formyltetrahydrofolate + H(+). The protein operates within one-carbon metabolism; tetrahydrofolate interconversion. Its function is as follows. Catalyzes the oxidation of 5,10-methylenetetrahydrofolate to 5,10-methenyltetrahydrofolate and then the hydrolysis of 5,10-methenyltetrahydrofolate to 10-formyltetrahydrofolate. This is Bifunctional protein FolD from Wolbachia pipientis subsp. Culex pipiens (strain wPip).